Reading from the N-terminus, the 84-residue chain is Toxin To7 (84 aa).

Positions 1 to 20 (MSIFPIVLALLLIGLEETEA) are cleaved as a signal peptide. Residues 21 to 83 (LDGYPLSKIN…KMYPGSSPCY (63 aa)) form the LCN-type CS-alpha/beta domain. Cystine bridges form between C32-C82, C36-C59, C42-C64, and C46-C66.

In terms of tissue distribution, expressed by the venom gland.

It localises to the secreted. In terms of biological role, inhibits voltage-gated sodium channels (Nav). This Tityus obscurus (Amazonian scorpion) protein is Toxin To7.